A 113-amino-acid chain; its full sequence is Iron-sulfur cluster insertion protein ErpA (113 aa).

Positions 41, 105, and 107 each coordinate iron-sulfur cluster.

It belongs to the HesB/IscA family. As to quaternary structure, homodimer. Requires iron-sulfur cluster as cofactor.

In terms of biological role, required for insertion of 4Fe-4S clusters for at least IspG. The sequence is that of Iron-sulfur cluster insertion protein ErpA from Hydrogenovibrio crunogenus (strain DSM 25203 / XCL-2) (Thiomicrospira crunogena).